Here is a 353-residue protein sequence, read N- to C-terminus: Histidinol-phosphate aminotransferase (353 aa).

Position 209 is an N6-(pyridoxal phosphate)lysine (K209).

This sequence belongs to the class-II pyridoxal-phosphate-dependent aminotransferase family. Histidinol-phosphate aminotransferase subfamily. Homodimer. Pyridoxal 5'-phosphate is required as a cofactor.

The catalysed reaction is L-histidinol phosphate + 2-oxoglutarate = 3-(imidazol-4-yl)-2-oxopropyl phosphate + L-glutamate. Its pathway is amino-acid biosynthesis; L-histidine biosynthesis; L-histidine from 5-phospho-alpha-D-ribose 1-diphosphate: step 7/9. This Buchnera aphidicola subsp. Cinara cedri (strain Cc) protein is Histidinol-phosphate aminotransferase.